Consider the following 403-residue polypeptide: Microtubule-associated protein tau (403 aa).

Over residues 1 to 32 (MAEPRQEFDVMEDHAQGDYTLQDHEGDMEPGL) the composition is skewed to basic and acidic residues. The tract at residues 1–219 (MAEPRQEFDV…GPMPDLKNVK (219 aa)) is disordered. Residue alanine 2 is modified to N-acetylalanine. The residue at position 19 (tyrosine 19) is a Phosphotyrosine. A Glycyl lysine isopeptide (Lys-Gly) (interchain with G-Cter in ubiquitin) cross-link involves residue lysine 33. Phosphoserine is present on residues serine 35 and serine 50. Residues 50 to 60 (SETSDAKSTPT) are compositionally biased toward polar residues. A phosphothreonine mark is found at threonine 58, threonine 60, and threonine 71. A compositionally biased stretch (basic and acidic residues) spans 90–106 (KGKDGTGPDDKKAKGAD). A Phosphothreonine modification is found at threonine 115. Arginine 117 carries the post-translational modification Omega-N-methylarginine. An N6,N6-dimethyllysine; alternate modification is found at lysine 125. Lysine 125 is modified (N6-acetyllysine; alternate). 4 positions are modified to phosphothreonine: threonine 131, threonine 137, threonine 138, and threonine 143. The span at 136–147 (KTTPTPKTSPGT) shows a compositional bias: low complexity. Phosphoserine is present on residues serine 153 and serine 157. Residues 156–176 (RSGYSSPGSPGTPGSRSRTPS) show a composition bias toward low complexity. The residue at position 159 (tyrosine 159) is a Phosphotyrosine. Phosphoserine occurs at positions 160, 161, and 164. Threonine 167 and threonine 174 each carry phosphothreonine. A Phosphoserine modification is found at serine 176. The residue at position 179 (threonine 179) is a Phosphothreonine. At lysine 187 the chain carries N6-acetyllysine. Threonine 193 is subject to Phosphothreonine. Residues serine 197 and serine 199 each carry the phosphoserine modification. Tau/MAP repeat units lie at residues 206 to 236 (QAAP…GGGK), 237 to 267 (VQII…GGGS), 268 to 298 (VQIV…GGGQ), and 299 to 330 (VEVK…GGGN). Lysine 216 participates in a covalent cross-link: Glycyl lysine isopeptide (Lys-Gly) (interchain with G-Cter in ubiquitin). The residue at position 221 (lysine 221) is an N6-acetyllysine; alternate. Lysine 221 carries the post-translational modification N6-methyllysine; alternate. A Glycyl lysine isopeptide (Lys-Gly) (interchain with G-Cter in ubiquitin); alternate cross-link involves residue lysine 221. Serine 224 is subject to Phosphoserine. Residue lysine 229 forms a Glycyl lysine isopeptide (Lys-Gly) (interchain with G-Cter in ubiquitin) linkage. N6-acetyllysine; alternate is present on lysine 243. A Glycyl lysine isopeptide (Lys-Gly) (interchain with G-Cter in ubiquitin); alternate cross-link involves residue lysine 243. Phosphoserine occurs at positions 247 and 251. Lysine 252 bears the N6-acetyllysine mark. Cysteine 253 and cysteine 284 form a disulfide bridge. Residue serine 255 is modified to Phosphoserine. Lysine 260 is modified (N6-acetyllysine; alternate). Lysine 260 participates in a covalent cross-link: Glycyl lysine isopeptide (Lys-Gly) (interchain with G-Cter in ubiquitin); alternate. Serine 267 carries the phosphoserine modification. Lysine 273 carries the post-translational modification N6,N6-dimethyllysine; alternate. N6-acetyllysine; alternate is present on residues lysine 273, lysine 279, and lysine 283. Residues lysine 273, lysine 279, and lysine 283 each participate in a glycyl lysine isopeptide (Lys-Gly) (interchain with G-Cter in ubiquitin); alternate cross-link. A Phosphoserine modification is found at serine 286. N6-acetyllysine; alternate is present on residues lysine 293, lysine 305, and lysine 309. Residues lysine 293, lysine 305, and lysine 309 each participate in a glycyl lysine isopeptide (Lys-Gly) (interchain with G-Cter in ubiquitin); alternate cross-link. Residue arginine 311 is modified to Omega-N-methylarginine. Serine 314 is modified (phosphoserine). Lysine 315 participates in a covalent cross-link: Glycyl lysine isopeptide (Lys-Gly) (interchain with G-Cter in ubiquitin). Serine 318 is subject to Phosphoserine. Lysine 331 carries the N6-acetyllysine; alternate modification. Lysine 331 participates in a covalent cross-link: Glycyl lysine isopeptide (Lys-Gly) (interchain with G-Cter in ubiquitin); alternate. Residue lysine 337 forms a Glycyl lysine isopeptide (Lys-Gly) (interchain with G-Cter in ubiquitin) linkage. Lysine 347 bears the N6-acetyllysine; alternate mark. A Glycyl lysine isopeptide (Lys-Gly) (interchain with G-Cter in ubiquitin); alternate cross-link involves residue lysine 347. Position 356 is a phosphotyrosine (tyrosine 356). Phosphoserine is present on residues serine 358 and serine 362. Residues 360–379 (VVSGDTSPRHLSNVSSTGSI) are disordered. The segment covering 363 to 378 (GDTSPRHLSNVSSTGS) has biased composition (polar residues). Threonine 365 carries the phosphothreonine modification. 4 positions are modified to phosphoserine: serine 366, serine 371, serine 378, and serine 384. Residue threonine 389 is modified to Phosphothreonine.

In terms of assembly, interacts with MARK1, MARK2, MARK3 and MARK4. Interacts with SQSTM1 when polyubiquitinated. Interacts with PSMC2 through SQSTM1. Interacts with FKBP4. Binds to CSNK1D. Interacts with SGK1. Interacts with PIN1. Interacts with LRRK2. Interacts with LRP1, leading to endocytosis; this interaction is reduced in the presence of LRPAP1/RAP. Post-translationally, polyubiquitinated. Requires functional TRAF6 and may provoke SQSTM1-dependent degradation by the proteasome. In terms of processing, phosphorylation at various serine and threonine residues in S-P or T-P motifs by proline-directed protein kinases (PDPK1, CDK1, CDK5, GSK3, MAPK) (a few sites per protein in interphase, more in mitosis), and at serine residues in K-X-G-S motifs by MAP/microtubule affinity-regulating kinase (MARK1, MARK2, MARK3, MARK4), causing detachment from microtubules, and their disassembly. Phosphorylation at Ser-224 by BRSK1 and BRSK2 in neurons affects ability to bind microtubules and plays a role in neuron polarization. Phosphorylated by PHK. Dephosphorylation at several serine and threonine residues by the serine/threonine phosphatase PPP5C. Expressed in neurons.

The protein resides in the cytoplasm. Its subcellular location is the cytosol. It is found in the cell membrane. It localises to the cytoskeleton. The protein localises to the cell projection. The protein resides in the axon. Its subcellular location is the dendrite. Functionally, promotes microtubule assembly and stability, and might be involved in the establishment and maintenance of neuronal polarity. The C-terminus binds axonal microtubules while the N-terminus binds neural plasma membrane components, suggesting that tau functions as a linker protein between both. Axonal polarity is predetermined by tau localization (in the neuronal cell) in the domain of the cell body defined by the centrosome. The short isoforms allow plasticity of the cytoskeleton whereas the longer isoforms may preferentially play a role in its stabilization. This is Microtubule-associated protein tau (MAPT) from Capra hircus (Goat).